We begin with the raw amino-acid sequence, 131 residues long: Arsenate reductase 2 (131 aa).

Residues C10, C82, and C89 each act as nucleophile in the active site. Cystine bridges form between C10–C82 and C82–C89.

It belongs to the low molecular weight phosphotyrosine protein phosphatase family. Thioredoxin-coupled ArsC subfamily.

The protein localises to the cytoplasm. The catalysed reaction is arsenate + [thioredoxin]-dithiol + H(+) = arsenite + [thioredoxin]-disulfide + H2O. In terms of biological role, catalyzes the reduction of arsenate [As(V)] to arsenite [As(III)]. In Staphylococcus saprophyticus subsp. saprophyticus (strain ATCC 15305 / DSM 20229 / NCIMB 8711 / NCTC 7292 / S-41), this protein is Arsenate reductase 2.